We begin with the raw amino-acid sequence, 406 residues long: 3-isopropylmalate dehydrogenase, chloroplastic (406 aa).

A chloroplast-targeting transit peptide spans 1–34; that stretch reads MAAALQTNIRPVKFPATLRALTKQSSPAPFRVRC. Position 71 is a phosphoserine (Ser-71). 117-130 lines the NAD(+) pocket; sequence GYKWDKNEKHLKPE. Residues Arg-137, Arg-147, Arg-175, and Asp-265 each coordinate substrate. Mg(2+) contacts are provided by Asp-265, Asp-289, and Asp-293. 323–335 is a binding site for NAD(+); the sequence is GSAPDIAGQDKAN.

Belongs to the isocitrate and isopropylmalate dehydrogenases family. In terms of assembly, homodimer. Mg(2+) serves as cofactor. Requires Mn(2+) as cofactor.

It localises to the plastid. It is found in the chloroplast. It catalyses the reaction (2R,3S)-3-isopropylmalate + NAD(+) = 4-methyl-2-oxopentanoate + CO2 + NADH. Its pathway is amino-acid biosynthesis; L-leucine biosynthesis; L-leucine from 3-methyl-2-oxobutanoate: step 3/4. Its function is as follows. Catalyzes the oxidation of 3-carboxy-2-hydroxy-4-methylpentanoate (3-isopropylmalate) to 3-carboxy-4-methyl-2-oxopentanoate. The product decarboxylates to 4-methyl-2 oxopentanoate. In Brassica napus (Rape), this protein is 3-isopropylmalate dehydrogenase, chloroplastic.